Reading from the N-terminus, the 370-residue chain is Anthranilate phosphoribosyltransferase (370 aa).

The segment at 1 to 27 (MALSAEGSSGGSRGGSPKAEAASVPSW) is disordered. 5-phospho-alpha-D-ribose 1-diphosphate contacts are provided by residues glycine 107, 110–111 (GD), threonine 115, 117–120 (NLST), 135–143 (KHGNRAASS), and glycine 147. Residue glycine 107 coordinates anthranilate. Serine 119 lines the Mg(2+) pocket. Anthranilate is bound at residue asparagine 138. Residue arginine 193 coordinates anthranilate. Residues aspartate 251 and glutamate 252 each coordinate Mg(2+).

This sequence belongs to the anthranilate phosphoribosyltransferase family. As to quaternary structure, homodimer. It depends on Mg(2+) as a cofactor.

The catalysed reaction is N-(5-phospho-beta-D-ribosyl)anthranilate + diphosphate = 5-phospho-alpha-D-ribose 1-diphosphate + anthranilate. It participates in amino-acid biosynthesis; L-tryptophan biosynthesis; L-tryptophan from chorismate: step 2/5. In terms of biological role, catalyzes the transfer of the phosphoribosyl group of 5-phosphorylribose-1-pyrophosphate (PRPP) to anthranilate to yield N-(5'-phosphoribosyl)-anthranilate (PRA). In Mycobacterium bovis (strain ATCC BAA-935 / AF2122/97), this protein is Anthranilate phosphoribosyltransferase.